The sequence spans 266 residues: Undecaprenyl-diphosphatase (266 aa).

The next 8 helical transmembrane spans lie at 1–21, 40–60, 90–110, 113–133, 145–165, 188–208, 217–237, and 245–265; these read MTLL…FLPV, LPLY…LVVL, LLVV…KPIF, LNQP…LWFT, LSWL…IPGI, FSFL…IDEV, PLLG…LWLF, and FKWF…KVAM.

It belongs to the UppP family.

It is found in the cell inner membrane. It carries out the reaction di-trans,octa-cis-undecaprenyl diphosphate + H2O = di-trans,octa-cis-undecaprenyl phosphate + phosphate + H(+). Its function is as follows. Catalyzes the dephosphorylation of undecaprenyl diphosphate (UPP). Confers resistance to bacitracin. This Acaryochloris marina (strain MBIC 11017) protein is Undecaprenyl-diphosphatase.